Consider the following 335-residue polypeptide: Tryptophan--tRNA ligase (335 aa).

Residues 13–15 (QPS) and 21–22 (GN) each bind ATP. The 'HIGH' region motif lies at 14–22 (PSGNLTIGN). Position 136 (Asp136) interacts with L-tryptophan. ATP contacts are provided by residues 148–150 (GQD), Ile187, and 196–200 (KMSKS). A 'KMSKS' region motif is present at residues 196 to 200 (KMSKS).

The protein belongs to the class-I aminoacyl-tRNA synthetase family. As to quaternary structure, homodimer.

The protein localises to the cytoplasm. It carries out the reaction tRNA(Trp) + L-tryptophan + ATP = L-tryptophyl-tRNA(Trp) + AMP + diphosphate + H(+). Catalyzes the attachment of tryptophan to tRNA(Trp). The chain is Tryptophan--tRNA ligase from Buchnera aphidicola subsp. Acyrthosiphon pisum (strain APS) (Acyrthosiphon pisum symbiotic bacterium).